The chain runs to 997 residues: Chromosomal passenger complex protein bir1 (997 aa).

BIR repeat units follow at residues 25–99 and 120–194; these read RLDT…PWAY and REQT…VFFT. The Zn(2+) site is built by Cys163, Cys166, His183, and Cys190. Disordered stretches follow at residues 217–329, 370–527, 682–701, 755–782, and 817–838; these read EDLT…FSKG, TVSD…ENDE, TRDV…NHEE, SPKL…EKEA, and RTSV…ETKV. Residues 240–252 show a composition bias toward polar residues; the sequence is TLNFSPSRKNNLN. Over residues 288–299 the composition is skewed to basic residues; that stretch reads PRRKNKSPKKSK. Residues 311–320 are compositionally biased toward acidic residues; the sequence is SDEDEDDDDL. The span at 370–392 shows a compositional bias: polar residues; that stretch reads TVSDITGHQSVTDESDEQNNCMS. The span at 408–423 shows a compositional bias: low complexity; that stretch reads SVVSKSKEISSSVSSV. Basic and acidic residues predominate over residues 426–451; the sequence is EQNHTEKQVAIETPEQQKVEKEDEHL. 2 stretches are compositionally biased toward polar residues: residues 463–476 and 485–512; these read KQPI…SSPD and RVSS…FSNI. The span at 756-772 shows a compositional bias: polar residues; it reads PKLQSKNNQTVEAVNTE. Residues 773–782 show a composition bias toward basic and acidic residues; that stretch reads TSDKLQEKEA. Residues 817-830 are compositionally biased toward polar residues; sequence RTSVQNGTRSVSKN.

As to quaternary structure, component of the CPC complex at least composed of ark1, bir1 and pic1. Interacts with the mitotic checkpoint complex (MCC) subunit mad3. In terms of processing, phosphorylated by ark1.

The protein resides in the nucleus. The protein localises to the cytoplasm. Its subcellular location is the cytoskeleton. It is found in the spindle. It localises to the chromosome. The protein resides in the centromere. Functionally, component of the chromosomal passenger complex (CPC), a complex that acts as a key regulator of chromosome segregation and cytokinesis. Has a role in chromosome segregation by recruiting condensin and ark1 kinase to appropriate sites as the cell progresses through mitosis. Ark1 activity depends upon bir1 function and phosphorylation. Ark1 with bir1 function is required for full-scale association with kinetochores and formation of a complex with mad3. This chain is Chromosomal passenger complex protein bir1 (bir1), found in Schizosaccharomyces pombe (strain 972 / ATCC 24843) (Fission yeast).